Here is a 735-residue protein sequence, read N- to C-terminus: Mitochondrial potassium channel ATP-binding subunit (735 aa).

The transit peptide at M1–F25 directs the protein to the mitochondrion. The Mitochondrial matrix segment spans residues Q26–H144. The helical transmembrane segment at L145–I165 threads the bilayer. The ABC transmembrane type-1 domain maps to V150–R437. Residues P166–S195 are Mitochondrial intermembrane-facing. A helical membrane pass occupies residues T196–L216. The Mitochondrial matrix portion of the chain corresponds to S217–T295. Residues L296–L316 traverse the membrane as a helical segment. At R317 to S735 the chain is on the mitochondrial intermembrane side. Residues V472–R709 enclose the ABC transporter domain. G507–T514 is a binding site for ATP. The interval L712–S735 is disordered.

The protein belongs to the ABC transporter superfamily. ABCB family. Multidrug resistance exporter (TC 3.A.1.201) subfamily. As to quaternary structure, the mitochondrial potassium channel (mitoK(ATP)) is composed of 4 subunits of CCDC51/MITOK and 4 subunits of ABCB8/MITOSUR. Interacts with C10orf88/PAAT. Interacts with NRP1; NRP1 regulates ABCB8/MITOSUR protein levels in mitochondria. In terms of tissue distribution, ubiquitous.

It is found in the mitochondrion inner membrane. Its activity is regulated as follows. Channel activity inhibited by ATP via ABCB8/MITOSUR subunit. In terms of biological role, ATP-binding subunit of the mitochondrial ATP-gated potassium channel (mitoK(ATP)). Together with pore-forming subunit CCDC51/MITOK of the mitoK(ATP) channel, mediates ATP-dependent potassium currents across the mitochondrial inner membrane. An increase in ATP intracellular levels closes the channel, inhibiting K(+) transport, whereas a decrease in ATP levels enhances K(+) uptake in the mitochondrial matrix. Plays a role in mitochondrial iron transport. Required for maintenance of normal cardiac function, possibly by influencing mitochondrial iron export and regulating the maturation of cytosolic iron sulfur cluster-containing enzymes. The polypeptide is Mitochondrial potassium channel ATP-binding subunit (Homo sapiens (Human)).